The sequence spans 89 residues: Submaxillary mucin (89 aa).

The tract at residues A1 to L89 is disordered. Residue S3 is glycosylated (O-linked (GalNAc...) serine; partial). T7 and T14 each carry an O-linked (GalNAc...) threonine; partial glycan. O-linked (GalNAc...) serine; partial glycosylation is present at S15. A glycan (O-linked (GalNAc...) threonine; partial) is linked at T23. A glycan (O-linked (GalNAc...) serine; partial) is linked at S25. A glycan (O-linked (GalNAc...) threonine; partial) is linked at T27. A glycan (O-linked (GalNAc...) serine; partial) is linked at S29. O-linked (GalNAc...) threonine; partial glycosylation is present at T34. S38 carries O-linked (GalNAc...) serine; partial glycosylation. An O-linked (GalNAc...) threonine; partial glycan is attached at T42. S47 and S49 each carry an O-linked (GalNAc...) serine; partial glycan. T50 is a glycosylation site (O-linked (GalNAc...) threonine; partial). A glycan (O-linked (GalNAc...) serine; partial) is linked at S54. Low complexity predominate over residues A56–P71. O-linked (GalNAc...) threonine; partial glycans are attached at residues T59, T60, T67, and T68. S73 and S76 each carry an O-linked (GalNAc...) serine; partial glycan. O-linked (GalNAc...) threonine; partial glycosylation occurs at T78. The O-linked (GalNAc...) serine; partial glycan is linked to S83.

Post-translationally, heavily O-glycosylated at most but not all Ser and Thr residues. In terms of tissue distribution, expressed in the submaxillary salivary gland.

The protein localises to the secreted. The chain is Submaxillary mucin from Canis lupus familiaris (Dog).